A 121-amino-acid chain; its full sequence is Large ribosomal subunit protein P2 (121 aa).

Residues Val-72–Pro-99 are compositionally biased toward low complexity. A disordered region spans residues Val-72–Asp-121.

The protein belongs to the eukaryotic ribosomal protein P1/P2 family. P1 and P2 exist as dimers at the large ribosomal subunit. Phosphorylated.

Plays an important role in the elongation step of protein synthesis. The sequence is that of Large ribosomal subunit protein P2 from Taenia solium (Pork tapeworm).